We begin with the raw amino-acid sequence, 256 residues long: Stanniocalcin (256 aa).

The first 18 residues, 1-18, serve as a signal peptide directing secretion; that stretch reads MLAKFGLCAVFLVLGTAA. Residues 19–33 constitute a propeptide that is removed on maturation; that stretch reads TFDTDPEEASPRRAR. The N-linked (GlcNAc...) asparagine glycan is linked to Asn62. Positions 204–241 are disordered; the sequence is QGSNQGPNSAPAGWRWPMGSPPSFKIQPSMRGRDPTHL.

This sequence belongs to the stanniocalcin family. In terms of assembly, homodimer; disulfide-linked. As to expression, produced and secreted by the corpuscles of Stannius.

The protein resides in the secreted. Functionally, its primary function is the prevention of hypercalcemia. Upon release into the circulation, it lowers calcium transport by the gills, thereby reducing its rate of influx from the environment into the extracellular compartment. STC also stimulates phosphate reabsorption by renal proximal tubules. The consequence of this action is increased levels of plasma phosphate, which combines with excess calcium and promotes its disposal into bone and scales. The sequence is that of Stanniocalcin (stc) from Oncorhynchus mykiss (Rainbow trout).